The sequence spans 1121 residues: Solute carrier family 38 member 10 (1121 aa).

10 helical membrane-spanning segments follow: residues 4–24 (AAAS…GVSV), 36–58 (IVLG…MFLV), 84–104 (LVET…YVVI), 120–140 (VGGT…VLPL), 153–173 (FSAM…LSSL), 229–249 (IFAS…FFGY), 272–292 (MLRV…ILPC), 323–343 (ALTL…PNVE), 345–365 (ILGL…PALI), and 378–398 (VVLW…LSVS). Disordered stretches follow at residues 434–691 (VVAV…EEAG), 731–904 (KEIH…AATG), and 965–1068 (ISDG…ELAP). Basic and acidic residues-rich tracts occupy residues 439-454 (EDGR…REEL), 466-475 (PGREDGKEAQ), 493-508 (EAHR…KVVV), and 544-559 (DSER…EVGK). Position 612 is a phosphoserine (serine 612). Composition is skewed to basic and acidic residues over residues 645–659 (DSDH…EEKP), 668–679 (EPREQRDVERAG), 731–752 (KEIH…EVHP), 763–773 (EAPEGKARETM), 802–811 (SLEHPERPVG), and 863–876 (PARE…RLAE). Phosphothreonine is present on threonine 772. A Phosphoserine modification is found at serine 802. Serine 890 and serine 966 each carry phosphoserine. Residues 976 to 998 (HRLDHGGYLEMRKEARGGDHMPV) show a composition bias toward basic and acidic residues. Serine 999 is subject to Phosphoserine. 2 stretches are compositionally biased toward basic and acidic residues: residues 1035–1044 (DNAKPNRDLK) and 1057–1068 (DLGPHAEGELAP).

It belongs to the amino acid/polyamine transporter 2 family.

Its subcellular location is the membrane. It catalyses the reaction L-glutamate(out) = L-glutamate(in). It carries out the reaction L-glutamine(out) = L-glutamine(in). The enzyme catalyses L-alanine(in) = L-alanine(out). The catalysed reaction is L-serine(in) = L-serine(out). It catalyses the reaction L-leucine(in) = L-leucine(out). In terms of biological role, facilitates bidirectional transport of amino acids. May act as a glutamate sensor that regulates glutamate-glutamine cycle and mTOR signaling in the brain. The transport mechanism remains to be elucidated. The chain is Solute carrier family 38 member 10 from Pongo abelii (Sumatran orangutan).